The chain runs to 275 residues: Centromere protein V (275 aa).

Low complexity-rich tracts occupy residues 1-10 (MRRSRSSAAA) and 17-51 (RSGA…QAGS). The interval 1–109 (MRRSRSSAAA…ATPTSSASNL (109 aa)) is disordered. Phosphoserine is present on residues Ser18 and Ser21. Arg43 bears the Omega-N-methylarginine mark. The segment covering 79-100 (GEPPPPELALLPPPPPPPPTPA) has biased composition (pro residues). Phosphothreonine is present on residues Thr98, Thr101, and Thr103. The CENP-V/GFA domain occupies 148-260 (HTGGCHCGAV…TEEFNGSDWE (113 aa)). Zn(2+) is bound by residues Cys152, Cys154, Cys172, Cys174, Cys177, Cys216, and Cys219. The residue at position 257 (Ser257) is a Phosphoserine.

This sequence belongs to the Gfa family. Zn(2+) serves as cofactor.

It is found in the chromosome. It localises to the centromere. The protein localises to the kinetochore. Its subcellular location is the nucleus. The protein resides in the cytoplasm. It is found in the cytoskeleton. It localises to the spindle. In terms of biological role, required for distribution of pericentromeric heterochromatin in interphase nuclei and for centromere formation and organization, chromosome alignment and cytokinesis. This Homo sapiens (Human) protein is Centromere protein V (CENPV).